The chain runs to 157 residues: Altered inheritance of mitochondria protein 19, mitochondrial (157 aa).

Ser2 carries the post-translational modification N-acetylserine. 4 helical membrane-spanning segments follow: residues 31-48, 80-96, 103-119, and 131-147; these read ALANAALLASTPVLSPSF, TALFFSTMQAIGAYMIY, GAGFIATWSALYLIVGG, and TWPLVLSSVSLANAVLY.

This sequence belongs to the AIM19 family.

It is found in the mitochondrion membrane. The polypeptide is Altered inheritance of mitochondria protein 19, mitochondrial (AIM19) (Saccharomyces cerevisiae (strain ATCC 204508 / S288c) (Baker's yeast)).